We begin with the raw amino-acid sequence, 207 residues long: CASP-like protein F16 (207 aa).

The segment at 1–30 (MEKSEKGNGVAPATRSPMALMGSSRNENQE) is disordered. Topologically, residues 1–37 (MEKSEKGNGVAPATRSPMALMGSSRNENQEVNTSMRT) are cytoplasmic. A helical membrane pass occupies residues 38-58 (AETMLRLVPMALGVAALVVML). The Extracellular segment spans residues 59-79 (KNSQSNDFGSVSYSDLGAFRY). Residues 80–100 (LVHANGICAGYSLLSAIIAAV) form a helical membrane-spanning segment. The Cytoplasmic portion of the chain corresponds to 101–108 (PSPSTMPR). Residues 109-129 (AWTFFLLDQILTYVILGAAAV) traverse the membrane as a helical segment. Residues 130 to 159 (STEVLYLANKGDSAITWSAACGTFAGFCHK) are Extracellular-facing. Residues 160–180 (ATIAVVITFVAVICYAVLSLV) form a helical membrane-spanning segment. Topologically, residues 181–207 (SSYRLFTKFDAPVNYPSKTIEATVFHG) are cytoplasmic.

The protein belongs to the Casparian strip membrane proteins (CASP) family. Homodimer and heterodimers.

It localises to the cell membrane. The sequence is that of CASP-like protein F16 (F16) from Gossypium hirsutum (Upland cotton).